Reading from the N-terminus, the 742-residue chain is 5-methyltetrahydropteroyltriglutamate--homocysteine methyltransferase (742 aa).

5-methyltetrahydropteroyltri-L-glutamate is bound by residues 18 to 21 (REWK) and lysine 112. Residues 420–422 (IGS) and glutamate 473 contribute to the L-homocysteine site. L-methionine-binding positions include 420–422 (IGS) and glutamate 473. Tryptophan 550 serves as a coordination point for 5-methyltetrahydropteroyltri-L-glutamate. Residue aspartate 588 coordinates L-homocysteine. L-methionine is bound at residue aspartate 588. Glutamate 594 lines the 5-methyltetrahydropteroyltri-L-glutamate pocket. Residues histidine 630, cysteine 632, and glutamate 654 each coordinate Zn(2+). Histidine 683 (proton donor) is an active-site residue. Cysteine 715 lines the Zn(2+) pocket.

It belongs to the vitamin-B12 independent methionine synthase family. Requires Zn(2+) as cofactor.

It catalyses the reaction 5-methyltetrahydropteroyltri-L-glutamate + L-homocysteine = tetrahydropteroyltri-L-glutamate + L-methionine. It participates in amino-acid biosynthesis; L-methionine biosynthesis via de novo pathway; L-methionine from L-homocysteine (MetE route): step 1/1. Its function is as follows. Catalyzes the transfer of a methyl group from 5-methyltetrahydrofolate to homocysteine resulting in methionine formation. In Staphylococcus aureus (strain MRSA252), this protein is 5-methyltetrahydropteroyltriglutamate--homocysteine methyltransferase.